Here is a 355-residue protein sequence, read N- to C-terminus: 3-isopropylmalate dehydrogenase (355 aa).

Residues Arg-90, Arg-100, Arg-128, and Asp-222 each contribute to the substrate site. Positions 222, 246, and 250 each coordinate Mg(2+). NAD(+) is bound at residue Gly-280 to Asn-292.

This sequence belongs to the isocitrate and isopropylmalate dehydrogenases family. LeuB type 1 subfamily. Homodimer. Mg(2+) serves as cofactor. It depends on Mn(2+) as a cofactor.

The protein localises to the cytoplasm. It catalyses the reaction (2R,3S)-3-isopropylmalate + NAD(+) = 4-methyl-2-oxopentanoate + CO2 + NADH. It functions in the pathway amino-acid biosynthesis; L-leucine biosynthesis; L-leucine from 3-methyl-2-oxobutanoate: step 3/4. Its function is as follows. Catalyzes the oxidation of 3-carboxy-2-hydroxy-4-methylpentanoate (3-isopropylmalate) to 3-carboxy-4-methyl-2-oxopentanoate. The product decarboxylates to 4-methyl-2 oxopentanoate. The polypeptide is 3-isopropylmalate dehydrogenase (Burkholderia thailandensis (strain ATCC 700388 / DSM 13276 / CCUG 48851 / CIP 106301 / E264)).